The chain runs to 137 residues: Phospholipase A2 group V (137 aa).

Positions 1–20 (MKRLLTLAWFLACSVPAVPG) are cleaved as a signal peptide. Intrachain disulfides connect cysteine 46–cysteine 137, cysteine 48–cysteine 64, cysteine 63–cysteine 117, cysteine 70–cysteine 110, cysteine 79–cysteine 103, and cysteine 97–cysteine 108. Ca(2+)-binding residues include tyrosine 47, glycine 49, and glycine 51. Residue histidine 67 is part of the active site. Aspartate 68 is a binding site for Ca(2+). The active site involves aspartate 111.

The protein belongs to the phospholipase A2 family. Requires Ca(2+) as cofactor. Post-translationally, this enzyme lacks one of the seven disulfide bonds found in similar PA2 proteins.

It localises to the secreted. The protein localises to the cell membrane. It is found in the cytoplasmic vesicle. Its subcellular location is the phagosome. The protein resides in the recycling endosome. It localises to the golgi apparatus. The protein localises to the cis-Golgi network. It is found in the trans-Golgi network. The catalysed reaction is a 1,2-diacyl-sn-glycero-3-phosphocholine + H2O = a 1-acyl-sn-glycero-3-phosphocholine + a fatty acid + H(+). It catalyses the reaction 1-hexadecanoyl-2-(9Z-octadecenoyl)-sn-glycero-3-phosphocholine + H2O = 1-hexadecanoyl-sn-glycero-3-phosphocholine + (9Z)-octadecenoate + H(+). The enzyme catalyses 1-hexadecanoyl-2-(5Z,8Z,11Z,14Z-eicosatetraenoyl)-sn-glycero-3-phosphocholine + H2O = 1-hexadecanoyl-sn-glycero-3-phosphocholine + (5Z,8Z,11Z,14Z)-eicosatetraenoate + H(+). It carries out the reaction 1-hexadecanoyl-2-(9Z,12Z-octadecadienoyl)-sn-glycero-3-phosphoethanolamine + H2O = 1-hexadecanoyl-sn-glycero-3-phosphoethanolamine + (9Z,12Z)-octadecadienoate + H(+). The catalysed reaction is 1-hexadecanoyl-2-(5Z,8Z,11Z,14Z-eicosatetraenoyl)-sn-glycero-3-phosphoethanolamine + H2O = 1-hexadecanoyl-sn-glycero-3-phosphoethanolamine + (5Z,8Z,11Z,14Z)-eicosatetraenoate + H(+). It catalyses the reaction 1-octadecanoyl-2-(5Z,8Z,11Z,14Z-eicosatetraenoyl)-sn-glycero-3-phospho-(1D-myo-inositol) + H2O = 1-octadecanoyl-sn-glycero-3-phospho-(1D-myo-inositol) + (5Z,8Z,11Z,14Z)-eicosatetraenoate + H(+). The enzyme catalyses 1-hexadecanoyl-2-(9Z-octadecenoyl)-sn-glycero-3-phosphoglycerol + H2O = 1-hexadecanoyl-sn-glycero-3-phosphoglycerol + (9Z)-octadecenoate + H(+). It carries out the reaction N-hexadecanoyl-1,2-di-(9Z-octadecenoyl)-sn-glycero-3-phosphoethanolamine + H2O = N-hexadecanoyl-1-(9Z-octadecenoyl)-sn-glycero-3-phosphoethanolamine + (9Z)-octadecenoate + H(+). The catalysed reaction is 1'-[1,2-di-(9Z-octadecenoyl)-sn-glycero-3-phospho]-3'-[1-(9Z-octadecenoyl)-sn-glycero-3-phospho]-glycerol + H2O = 1',3'-bis-[1-(9Z-octadecenoyl)-sn-glycero-3-phospho]-glycerol + (9Z)-octadecenoate + H(+). It catalyses the reaction 1',3'-bis[1,2-di-(9Z-octadecenoyl)-sn-glycero-3-phospho]-glycerol + H2O = 1'-[1,2-di-(9Z-octadecenoyl)-sn-glycero-3-phospho]-3'-[1-(9Z-octadecenoyl)-sn-glycero-3-phospho]-glycerol + (9Z)-octadecenoate + H(+). It functions in the pathway lipid metabolism; phospholipid metabolism. It participates in lipid metabolism; leukotriene B4 biosynthesis. Its pathway is lipid metabolism; leukotriene C4 biosynthesis. Its function is as follows. Secretory calcium-dependent phospholipase A2 that primarily targets extracellular phospholipids. Hydrolyzes the ester bond of the fatty acyl group attached at sn-2 position of phospholipids (phospholipase A2 activity), preferentially releasing fatty acyl groups with a low degree of unsaturation such as oleoyl (C18:1) and linoleoyl (C18:2) groups. Hydrolyzes low-density lipoprotein (LDL) phospholipids releasing unsaturated fatty acids that drive macrophage polarization toward an M2 phenotype. May act in an autocrine and paracrine manner. Contributes to lipid remodeling of cellular membranes at different subcellular locations and generation of lipid mediators involved in pathogen clearance. Cleaves sn-2 fatty acyl chains of cardiolipin, a major component of the inner membrane of mitochondria and bacterial membranes. Promotes phagocytosis of bacteria in macrophages through production of lysophosphatidylethanolamines. Displays bactericidal activity against Gram-positive bacteria by directly hydrolyzing phospholipids of the bacterial membrane. Promotes phagocytosis and killing of ingested fungi likely through controlling phagosome-lysosome fusion and phagosome maturation. Plays a role in biosynthesis of cysteinyl leukotrienes (CysLTs) in myeloid cells. In eosinophils, triggers perinuclear arachidonate release and LTC4 synthesis in a PLA2G4A-independent way. In neutrophils, amplifies CysLTs biosynthesis initiated by PLA2G4A. Promotes immune complex clearance in macrophages via stimulating synthesis of CysLTs, which act through CYSLTR1 to trigger phagocytosis. May regulate antigen processing in antigen-presenting cells. In pulmonary macrophages regulates IL33 production required for activation of group 2 innate lymphoid cells. May play a role in the biosynthesis of N-acyl ethanolamines that regulate energy metabolism. Hydrolyzes N-acyl phosphatidylethanolamines to N-acyl lysophosphatidylethanolamines, which are further cleaved by a lysophospholipase D to release N-acyl ethanolamines. In Rattus norvegicus (Rat), this protein is Phospholipase A2 group V (Pla2g5).